The sequence spans 530 residues: Ubiquitin carboxyl-terminal hydrolase 17-like protein 24 (530 aa).

Positions 80 to 375 (AGLQNMGNTC…QAYVLFYIQK (296 aa)) constitute a USP domain. Cysteine 89 functions as the Nucleophile in the catalytic mechanism. The active-site Proton acceptor is the histidine 334. Basic and acidic residues-rich tracts occupy residues 382-392 (SESVSRGREPR) and 398-412 (DTDR…KRDH). Disordered stretches follow at residues 382–412 (SESV…KRDH) and 477–530 (NHHP…LVCQ). The segment covering 493–505 (TPTHQESMNTGTL) has biased composition (polar residues). The segment covering 510-524 (GRARRSKGKNKHSKR) has biased composition (basic residues).

The protein belongs to the peptidase C19 family. USP17 subfamily. Expressed in heart, brain, liver and skeletal muscle.

It localises to the nucleus. The protein resides in the nucleolus. Its subcellular location is the endoplasmic reticulum. The enzyme catalyses Thiol-dependent hydrolysis of ester, thioester, amide, peptide and isopeptide bonds formed by the C-terminal Gly of ubiquitin (a 76-residue protein attached to proteins as an intracellular targeting signal).. In terms of biological role, deubiquitinating enzyme that removes conjugated ubiquitin from specific proteins to regulate different cellular processes that may include cell proliferation, progression through the cell cycle, apoptosis, cell migration, and the cellular response to viral infection. The chain is Ubiquitin carboxyl-terminal hydrolase 17-like protein 24 (USP17L24) from Homo sapiens (Human).